The primary structure comprises 274 residues: Penicillin-insensitive murein endopeptidase (274 aa).

The first 19 residues, 1–19, serve as a signal peptide directing secretion; the sequence is MKKTAIALLAWFVSSASLA. Intrachain disulfides connect C44/C265, C187/C235, and C216/C223. 6 residues coordinate Zn(2+): H110, H113, D120, D147, H150, and H211. The tract at residues 225 to 274 is disordered; it reads DQPLPPPGDGCGAELQSWFEPPKPGTTKPEKKTPPPLPPSCQALLDEHVL.

This sequence belongs to the peptidase M74 family. In terms of assembly, dimer. Requires Zn(2+) as cofactor.

It is found in the periplasm. In terms of biological role, murein endopeptidase that cleaves the D-alanyl-meso-2,6-diamino-pimelyl amide bond that connects peptidoglycan strands. Likely plays a role in the removal of murein from the sacculus. This chain is Penicillin-insensitive murein endopeptidase, found in Salmonella heidelberg (strain SL476).